Here is a 156-residue protein sequence, read N- to C-terminus: Small ribosomal subunit protein uS7 (156 aa).

It belongs to the universal ribosomal protein uS7 family. Part of the 30S ribosomal subunit. Contacts proteins S9 and S11.

Its function is as follows. One of the primary rRNA binding proteins, it binds directly to 16S rRNA where it nucleates assembly of the head domain of the 30S subunit. Is located at the subunit interface close to the decoding center, probably blocks exit of the E-site tRNA. The sequence is that of Small ribosomal subunit protein uS7 from Clostridium botulinum (strain Okra / Type B1).